Reading from the N-terminus, the 580-residue chain is Jasmonoyl--L-amino acid synthetase JAR6 (580 aa).

Residue S100 coordinates ATP. S103 contacts jasmonate. ATP contacts are provided by residues M120, T123, G164, N169, and 332 to 337 (GSSEGW). An L-alpha-amino acid is bound at residue 167 to 171 (TTNVY). 329–332 (ADYG) lines the jasmonate pocket. Residue 534–538 (KILDH) participates in an L-alpha-amino acid binding.

This sequence belongs to the IAA-amido conjugating enzyme family.

The enzyme catalyses a jasmonate + an L-alpha-amino acid + ATP = a jasmonyl-L-amino acid + AMP + diphosphate + H(+). In terms of biological role, catalyzes the synthesis of jasmonate-amino acid conjugates by adenylation. Catalyzes the conjugation of jasmonate (JA) to Ile, Leu and Val. Catalyzes the conjugation of JA to Ile that may mediate defense signaling and resistance to the herbivore Manduca sexta caterpillars. The chain is Jasmonoyl--L-amino acid synthetase JAR6 (JAR6) from Nicotiana attenuata (Coyote tobacco).